The chain runs to 498 residues: Protein translocase subunit SecY (498 aa).

Transmembrane regions (helical) follow at residues 23–43, 65–87, 124–144, 163–183, 191–211, 229–249, 281–301, 322–342, 382–402, and 406–426; these read FVISVFVTLFLILLFRVISVI, FDLFNLLGGGGLSQLSLFAVGIS, ITRFVTLPFAVVQAFAIIALI, AFYIVTMTAGTYIGIFIGDII, GITLLILSGILARLPDGFIVM, AINFSLYFLAFLVLLLAISFV, AAGVIPVIFASSIMSIPITIA, PVGISLYVILIIIFTFFYSYI, FIGAPFLAIVAVIPYIISLVL, and TTLSLGGTGIIIMVSASMELY. Basic and acidic residues predominate over residues 478–488; the sequence is VEPTQDKKKNP. A disordered region spans residues 478 to 498; that stretch reads VEPTQDKKKNPSDPLEVSQLW.

Belongs to the SecY/SEC61-alpha family. Component of the Sec protein translocase complex. Heterotrimer consisting of SecY, SecE and SecG subunits. The heterotrimers can form oligomers, although 1 heterotrimer is thought to be able to translocate proteins. Interacts with the ribosome. Interacts with SecDF, and other proteins may be involved. Interacts with SecA.

The protein localises to the cell membrane. In terms of biological role, the central subunit of the protein translocation channel SecYEG. Consists of two halves formed by TMs 1-5 and 6-10. These two domains form a lateral gate at the front which open onto the bilayer between TMs 2 and 7, and are clamped together by SecE at the back. The channel is closed by both a pore ring composed of hydrophobic SecY resides and a short helix (helix 2A) on the extracellular side of the membrane which forms a plug. The plug probably moves laterally to allow the channel to open. The ring and the pore may move independently. This chain is Protein translocase subunit SecY, found in Mycoplasmoides gallisepticum (strain R(low / passage 15 / clone 2)) (Mycoplasma gallisepticum).